Reading from the N-terminus, the 101-residue chain is MSDLEAKPSTEHLGDKIKDEDIKLRVIGQDSSEIHFKVKMTTPLKKLKKSYCQRQGVPVNSLRFLFEGQRIADNHTPEELGMEEEDVIEVYQEQIGGHSTV.

Residues 17 to 21 (IKDED) carry the Required for PML-NB formation motif. Residue Lys18 forms a Glycyl lysine isopeptide (Lys-Gly) (interchain with G-Cter in SUMO1P1/SUMO5) linkage. A Ubiquitin-like domain is found at 20-97 (EDIKLRVIGQ…IEVYQEQIGG (78 aa)). Residue Gly97 forms a Glycyl lysine isopeptide (Gly-Lys) (interchain with K-? in acceptor proteins) linkage. A propeptide spanning residues 98 to 101 (HSTV) is cleaved from the precursor.

It belongs to the ubiquitin family. SUMO subfamily. In terms of assembly, interacts with CBX4. Interacts with PIAS1. Found in a complex with SAE2. Interacts with UBE2I. Interacts with SP100. Interacts with HIPK2. Interacts with DAXX. Interacts with PML-RARA oncoprotein; PML-RARalpha outcompetes PML for SUMO1P1/SUMO5 conjugation. In terms of processing, cleavage of precursor form is necessary for function. Post-translationally, autosumoylated at Lys-18. High expression levels in testes and peripheral blood leukocyte. Expressed also in lung, placenta, liver, spleen and thymus.

It localises to the nucleus. In terms of biological role, ubiquitin-like protein that can be covalently attached to proteins as a monomer or as a lysine-linked polymer. Regulates the life cycle of promyelocytic leukemia nuclear bodies (PML-NBs). PolySUMO1P1/SUMO5 conjugation on 'Lys-160' of PML facilitates recruitment of PML-NB components, which enlarges PML-NB. SUMO1P1/SUMO5 also increases polySUMO2/3 conjugation of PML, resulting in RNF4-mediated disruption of PML-NBs. The protein is Small ubiquitin-related modifier 5 of Homo sapiens (Human).